The sequence spans 132 residues: D-ribose pyranase (132 aa).

The Proton donor role is filled by His20. Residues Asp28, His99, and 121–123 (YSN) each bind substrate.

Belongs to the RbsD / FucU family. RbsD subfamily. As to quaternary structure, homodecamer.

The protein localises to the cytoplasm. It carries out the reaction beta-D-ribopyranose = beta-D-ribofuranose. It functions in the pathway carbohydrate metabolism; D-ribose degradation; D-ribose 5-phosphate from beta-D-ribopyranose: step 1/2. Catalyzes the interconversion of beta-pyran and beta-furan forms of D-ribose. This chain is D-ribose pyranase, found in Pseudomonas putida (strain ATCC 47054 / DSM 6125 / CFBP 8728 / NCIMB 11950 / KT2440).